Here is a 100-residue protein sequence, read N- to C-terminus: Urease subunit gamma (100 aa).

Belongs to the urease gamma subunit family. As to quaternary structure, heterotrimer of UreA (gamma), UreB (beta) and UreC (alpha) subunits. Three heterotrimers associate to form the active enzyme.

It is found in the cytoplasm. It carries out the reaction urea + 2 H2O + H(+) = hydrogencarbonate + 2 NH4(+). It functions in the pathway nitrogen metabolism; urea degradation; CO(2) and NH(3) from urea (urease route): step 1/1. The polypeptide is Urease subunit gamma (Pseudomonas syringae pv. syringae (strain B728a)).